We begin with the raw amino-acid sequence, 191 residues long: Cell division protein SepF (191 aa).

The disordered stretch occupies residues 150–191; it reads TSSSPEEASPSSVSPKNTPQYSVENNTAPEPAWGNSKLSAFS. Low complexity predominate over residues 151 to 164; it reads SSSPEEASPSSVSP. A compositionally biased stretch (polar residues) spans 165–177; that stretch reads KNTPQYSVENNTA.

Belongs to the SepF family. Homodimer. Interacts with FtsZ.

The protein resides in the cytoplasm. Its function is as follows. Cell division protein that is part of the divisome complex and is recruited early to the Z-ring. Probably stimulates Z-ring formation, perhaps through the cross-linking of FtsZ protofilaments. Its function overlaps with FtsA. This is Cell division protein SepF from Prochlorococcus marinus (strain MIT 9312).